The sequence spans 96 residues: Large ribosomal subunit protein bL27 (96 aa).

The propeptide occupies 1–9 (MLRLDLQFF). Positions 13 to 35 (KGVGSTKNGRDSQSKRLGAKRAD) are disordered.

Belongs to the bacterial ribosomal protein bL27 family. The N-terminus is cleaved by ribosomal processing cysteine protease Prp.

This Bacillus cereus (strain B4264) protein is Large ribosomal subunit protein bL27.